A 309-amino-acid polypeptide reads, in one-letter code: Probable ABC transporter permease protein YesP (309 aa).

Helical transmembrane passes span 29-49 (FIIG…FLSF), 84-104 (FTYV…IAVI), 114-134 (IYRT…VAIM), 167-187 (ALWT…LIFL), 217-237 (LPIL…SAFM), and 275-295 (YASA…LILF). The ABC transmembrane type-1 domain maps to 80-294 (LKVTFTYVLA…VIVGLITLIL (215 aa)).

This sequence belongs to the binding-protein-dependent transport system permease family. MalFG subfamily.

The protein localises to the cell membrane. In terms of biological role, part of a binding-protein-dependent transport system. Probably responsible for the translocation of the substrate across the membrane. In Bacillus subtilis (strain 168), this protein is Probable ABC transporter permease protein YesP (yesP).